Here is a 169-residue protein sequence, read N- to C-terminus: Ureidoglycolate lyase (169 aa).

It belongs to the ureidoglycolate lyase family. Homodimer. It depends on Ni(2+) as a cofactor.

It carries out the reaction (S)-ureidoglycolate = urea + glyoxylate. It functions in the pathway nitrogen metabolism; (S)-allantoin degradation. Catalyzes the catabolism of the allantoin degradation intermediate (S)-ureidoglycolate, generating urea and glyoxylate. Involved in the utilization of allantoin as nitrogen source. The protein is Ureidoglycolate lyase of Pseudomonas aeruginosa (strain LESB58).